A 444-amino-acid polypeptide reads, in one-letter code: C4-dicarboxylate transport protein (444 aa).

9 helical membrane passes run 21-41 (HLYV…HFYP), 57-77 (LVKM…IAGM), 92-112 (IYFL…ANVV), 161-181 (GDIL…ALVG), 201-221 (LVSI…AFTI), 234-254 (LLIG…LGAV), 320-340 (IYMT…LSLS), 345-365 (LLLV…AGFI), and 368-388 (AATL…ILGI).

The protein belongs to the dicarboxylate/amino acid:cation symporter (DAACS) (TC 2.A.23) family.

The protein localises to the cell inner membrane. In terms of biological role, responsible for the transport of dicarboxylates such as succinate, fumarate, and malate from the periplasm across the membrane. The polypeptide is C4-dicarboxylate transport protein (Brucella anthropi (strain ATCC 49188 / DSM 6882 / CCUG 24695 / JCM 21032 / LMG 3331 / NBRC 15819 / NCTC 12168 / Alc 37) (Ochrobactrum anthropi)).